The chain runs to 607 residues: Elongation factor 4 (607 aa).

One can recognise a tr-type G domain in the interval 11-193; it reads SKIRNFSIIA…QIVEKVPAPT (183 aa). GTP contacts are provided by residues 23–28 and 140–143; these read DHGKST and NKID.

This sequence belongs to the TRAFAC class translation factor GTPase superfamily. Classic translation factor GTPase family. LepA subfamily.

The protein localises to the cell membrane. It carries out the reaction GTP + H2O = GDP + phosphate + H(+). Its function is as follows. Required for accurate and efficient protein synthesis under certain stress conditions. May act as a fidelity factor of the translation reaction, by catalyzing a one-codon backward translocation of tRNAs on improperly translocated ribosomes. Back-translocation proceeds from a post-translocation (POST) complex to a pre-translocation (PRE) complex, thus giving elongation factor G a second chance to translocate the tRNAs correctly. Binds to ribosomes in a GTP-dependent manner. In Bacillus anthracis (strain CDC 684 / NRRL 3495), this protein is Elongation factor 4.